Here is a 472-residue protein sequence, read N- to C-terminus: Kynureninase 1 (472 aa).

Pyridoxal 5'-phosphate-binding positions include Leu146, Thr147, 174–177 (FPSD), Ser231, Asp260, His263, and Tyr285. At Lys286 the chain carries N6-(pyridoxal phosphate)lysine. Pyridoxal 5'-phosphate-binding residues include Trp326 and Asn354.

This sequence belongs to the kynureninase family. As to quaternary structure, homodimer. Requires pyridoxal 5'-phosphate as cofactor.

The protein localises to the cytoplasm. It catalyses the reaction L-kynurenine + H2O = anthranilate + L-alanine + H(+). It carries out the reaction 3-hydroxy-L-kynurenine + H2O = 3-hydroxyanthranilate + L-alanine + H(+). It functions in the pathway amino-acid degradation; L-kynurenine degradation; L-alanine and anthranilate from L-kynurenine: step 1/1. The protein operates within cofactor biosynthesis; NAD(+) biosynthesis; quinolinate from L-kynurenine: step 2/3. Functionally, catalyzes the cleavage of L-kynurenine (L-Kyn) and L-3-hydroxykynurenine (L-3OHKyn) into anthranilic acid (AA) and 3-hydroxyanthranilic acid (3-OHAA), respectively. This chain is Kynureninase 1 (bna5-1), found in Aspergillus niger (strain ATCC MYA-4892 / CBS 513.88 / FGSC A1513).